Here is a 602-residue protein sequence, read N- to C-terminus: MQKSYGVALESPTGSGKTIMALKSALQYSSERKLKVLYLVRTNSQEEQVIKELRSLSSTMKIRAIPMQGRVNMCILYRMVDDLHEINAESLAKFCNMKKREVMAGNEAACPYFNFKIRSDETKRFLFDELPTAEEFYDYGERNNVCPYESMKAALPDADIVIAPYAYFLNRSVAEKFLSHWGVSRNQIVIILDEAHNLPDIGRSIGSFRISVESLNRADREAQAYGDPELSQKIHVSDLIEMIRSALQSMVSERCGKGDVRIRFQEFMEYMRIMNKRSEREIRSLLNYLYLFGEYVENEKEKVGKVPFSYCSSVASRIIAFSDQDEEKYAAILSPEDGGYMQAACLDPSGILEVLKESKTIHMSGTLDPFDFYSDITGFEIPFKKIGEIFPPENRYIAYYDGVSSKYDTLDEKELDRMATVIEDIILKVKKNTIVYFPSYSLMDRVENRVSFEHMKEYRGIDQKELYSMLKKFRRDHGTIFAVSGGRLSEGINFPGNELEMIILAGLPFPRPDAINRSLFDYYERKYGKGWEYSVVYPTAIKIRQEIGRLIRSAEDTGACVILDKRAGQFRKFIPDMKKTSDPASDIYNFFISAQAREKYGA.

Positions 1–247 (MQKSYGVALE…DLIEMIRSAL (247 aa)) constitute a Helicase ATP-binding domain. 11-18 (SPTGSGKT) is a binding site for ATP. 4 residues coordinate [4Fe-4S] cluster: cysteine 74, cysteine 95, cysteine 110, and cysteine 146. The DEAH box signature appears at 193 to 196 (DEAH). A Helicase C-terminal domain is found at 421–602 (VIEDIILKVK…SAQAREKYGA (182 aa)). SsDNA contacts are provided by tryptophan 531 and arginine 566.

Belongs to the helicase family. RAD3/XPD subfamily. In terms of assembly, monomer. [4Fe-4S] cluster serves as cofactor.

The enzyme catalyses Couples ATP hydrolysis with the unwinding of duplex DNA at the replication fork by translocating in the 5'-3' direction. This creates two antiparallel DNA single strands (ssDNA). The leading ssDNA polymer is the template for DNA polymerase III holoenzyme which synthesizes a continuous strand.. It catalyses the reaction ATP + H2O = ADP + phosphate + H(+). ATP-dependent 5'-3' DNA helicase. Thought to be involved in nucleotide excision repair (NER) of DNA. The polypeptide is ATP-dependent DNA helicase XPD (Thermoplasma acidophilum (strain ATCC 25905 / DSM 1728 / JCM 9062 / NBRC 15155 / AMRC-C165)).